We begin with the raw amino-acid sequence, 177 residues long: Coatomer subunit zeta-3 (177 aa).

It belongs to the adaptor complexes small subunit family. In terms of assembly, oligomeric complex that consists of at least the alpha, beta, beta', gamma, delta, epsilon and zeta subunits.

Its subcellular location is the cytoplasm. The protein resides in the golgi apparatus membrane. It is found in the cytoplasmic vesicle. It localises to the COPI-coated vesicle membrane. Functionally, the coatomer is a cytosolic protein complex that binds to dilysine motifs and reversibly associates with Golgi non-clathrin-coated vesicles, which further mediate biosynthetic protein transport from the ER, via the Golgi up to the trans Golgi network. Coatomer complex is required for budding from Golgi membranes, and is essential for the retrograde Golgi-to-ER transport of dilysine-tagged proteins. The zeta subunit may be involved in regulating the coat assembly and, hence, the rate of biosynthetic protein transport due to its association-dissociation properties with the coatomer complex. In Oryza sativa subsp. japonica (Rice), this protein is Coatomer subunit zeta-3.